A 291-amino-acid chain; its full sequence is Elongation factor Ts (291 aa).

The involved in Mg(2+) ion dislocation from EF-Tu stretch occupies residues 80 to 83; it reads TDFV.

This sequence belongs to the EF-Ts family.

It localises to the cytoplasm. Its function is as follows. Associates with the EF-Tu.GDP complex and induces the exchange of GDP to GTP. It remains bound to the aminoacyl-tRNA.EF-Tu.GTP complex up to the GTP hydrolysis stage on the ribosome. The polypeptide is Elongation factor Ts (Ligilactobacillus salivarius (strain UCC118) (Lactobacillus salivarius)).